The following is a 259-amino-acid chain: MKEHKARKRFGQNFLQDTRIIGDIVNAVRPQADDVVIEIGPGLAAITEPLAKKLNRLHVVEIDRDIVCRLKTLPFADKLVIHEGDVLQFDFNGISGKKKIVGNLPYNISTPLLFKLAEVADDVADMHFMLQKEVVERMVAAPKSNDYGRLGVMLQYFFDMELLIDVPPESFDPAPKIDSAVVRMIPVKHRIGKADDFDHFAKLVKLAFRQRRKTIRNNLKELADDDDLQAVGISPQDRAEHIAPEKYVALSNYLADKAV.

S-adenosyl-L-methionine contacts are provided by Asn13, Leu15, Gly40, Glu61, Asp85, and Asn103.

Belongs to the class I-like SAM-binding methyltransferase superfamily. rRNA adenine N(6)-methyltransferase family. RsmA subfamily.

Its subcellular location is the cytoplasm. It catalyses the reaction adenosine(1518)/adenosine(1519) in 16S rRNA + 4 S-adenosyl-L-methionine = N(6)-dimethyladenosine(1518)/N(6)-dimethyladenosine(1519) in 16S rRNA + 4 S-adenosyl-L-homocysteine + 4 H(+). Functionally, specifically dimethylates two adjacent adenosines (A1518 and A1519) in the loop of a conserved hairpin near the 3'-end of 16S rRNA in the 30S particle. May play a critical role in biogenesis of 30S subunits. In Neisseria gonorrhoeae (strain ATCC 700825 / FA 1090), this protein is Ribosomal RNA small subunit methyltransferase A.